The primary structure comprises 361 residues: 3-dehydroquinate synthase (361 aa).

This sequence belongs to the archaeal-type DHQ synthase family.

The catalysed reaction is 2-amino-2,3,7-trideoxy-D-lyxo-hept-6-ulosonate + NAD(+) + H2O = 3-dehydroquinate + NH4(+) + NADH + H(+). Its function is as follows. Catalyzes the oxidative deamination and cyclization of 2-amino-3,7-dideoxy-D-threo-hept-6-ulosonic acid (ADH) to yield 3-dehydroquinate (DHQ), which is fed into the canonical shikimic pathway of aromatic amino acid biosynthesis. The chain is 3-dehydroquinate synthase from Methanococcus vannielii (strain ATCC 35089 / DSM 1224 / JCM 13029 / OCM 148 / SB).